We begin with the raw amino-acid sequence, 648 residues long: MMTTLQNKEECGKGPKRIFAPPAQKSYSLLPCSPNSPKEETPGISSPETEARISLPKASLKKKEEKATMKNVPSREQEKKRKAQINKQAEKKEKEKSSLTNAEFEEIVQIVLQKSLQECLGMGSGLDFAETSCAQPVVSTQSDKEPGITASATDTDNANGEEVPHTQEISVSWEGEAAPEIRTSKLGQPDPAPSKKKSNRLTLSKRKKEAHEKVEKTQGGHEHRQEDRLKKTVQDHSQIRDQQKGEISGFGQCLVWVQCSFPNCGKWRRLCGNIDPSVLPDNWSCDQNTDVQYNRCDIPEETWTGLESDVAYASYIPGSIIWAKQYGYPWWPGMIESDPDLGEYFLFTSHLDSLPSKYHVTFFGETVSRAWIPVNMLKNFQELSLELSVMKKRRNDCSQKLGVALMMAQEAEQISIQERVNLFGFWSRFNGSNSNGERKDLQLSGLNSPGSCLEKKEKEEELEKEEGEKTDPILPIRKRVKIQTQKTKPRGLGGDAGTADGRGRTLQRKIMKRSLGRKSTAPPAPRMGRKEGQGNSDSDQPGPKKKFKAPQSKALAASFSEGKEVRTVPKNLGLSACKGACPSSAKEEPRHREPLTQEAGSVPLEDEASSDLDLEQLMEDVGRELGQSGELQHSNSDGEDFPVALFGK.

Disordered stretches follow at residues 1–103 (MMTT…TNAE) and 137–237 (VVST…QDHS). Basic and acidic residues-rich tracts occupy residues 61-79 (KKKE…EQEK) and 88-97 (QAEKKEKEKS). Residues 74-109 (SREQEKKRKAQINKQAEKKEKEKSSLTNAEFEEIVQ) are a coiled coil. Residues 194–208 (SKKKSNRLTLSKRKK) are compositionally biased toward basic residues. Residues 209–237 (EAHEKVEKTQGGHEHRQEDRLKKTVQDHS) are compositionally biased toward basic and acidic residues. The CW-type zinc finger occupies 250–304 (FGQCLVWVQCSFPNCGKWRRLCGNIDPSVLPDNWSCDQNTDVQYNRCDIPEETWT). Residues C259, C264, C285, and C296 each contribute to the Zn(2+) site. Residues 317-383 (PGSIIWAKQY…VNMLKNFQEL (67 aa)) form the PWWP domain. Residues 436–648 (GERKDLQLSG…EDFPVALFGK (213 aa)) form a disordered region. Residues 453–471 (LEKKEKEEELEKEEGEKTD) are compositionally biased toward basic and acidic residues. The segment covering 505 to 516 (TLQRKIMKRSLG) has biased composition (basic residues). Basic and acidic residues predominate over residues 585-595 (AKEEPRHREPL). Residues 604 to 618 (LEDEASSDLDLEQLM) are compositionally biased toward acidic residues. S636 carries the phosphoserine modification.

As to expression, testis.

The protein localises to the nucleus. The protein resides in the chromosome. Its function is as follows. Dual histone methylation reader specific for PRDM9-catalyzed histone marks (H3K4me3 and H3K36me3). Facilitates the repair of PRDM9-induced meiotic double-strand breaks (DSBs). Essential for male fertility and spermatogenesis. Required for meiosis prophase I progression in male but not in female germ cells. This Homo sapiens (Human) protein is Zinc finger CW-type PWWP domain protein 1 (ZCWPW1).